Reading from the N-terminus, the 481-residue chain is Ribosomal RNA small subunit methyltransferase F (481 aa).

Residues 119–125 (ASAPGSK), Glu-143, Asp-170, and Asp-188 contribute to the S-adenosyl-L-methionine site. The active-site Nucleophile is the Cys-241.

It belongs to the class I-like SAM-binding methyltransferase superfamily. RsmB/NOP family.

It localises to the cytoplasm. It catalyses the reaction cytidine(1407) in 16S rRNA + S-adenosyl-L-methionine = 5-methylcytidine(1407) in 16S rRNA + S-adenosyl-L-homocysteine + H(+). Specifically methylates the cytosine at position 1407 (m5C1407) of 16S rRNA. The sequence is that of Ribosomal RNA small subunit methyltransferase F from Shewanella sp. (strain MR-4).